A 123-amino-acid polypeptide reads, in one-letter code: Large ribosomal subunit protein uL14 (123 aa).

It belongs to the universal ribosomal protein uL14 family. Part of the 50S ribosomal subunit. Forms a cluster with proteins L3 and L19. In the 70S ribosome, L14 and L19 interact and together make contacts with the 16S rRNA in bridges B5 and B8.

Binds to 23S rRNA. Forms part of two intersubunit bridges in the 70S ribosome. The sequence is that of Large ribosomal subunit protein uL14 from Blochmanniella floridana.